The primary structure comprises 275 residues: Dihydropteroate synthase (275 aa).

The Pterin-binding domain occupies 15 to 267 (PQIMGILNFT…DVAATSDMLK (253 aa)). N22 contributes to the Mg(2+) binding site. (7,8-dihydropterin-6-yl)methyl diphosphate contacts are provided by residues T62, D96, N115, D185, K221, and 255–257 (RVH).

The protein belongs to the DHPS family. Homodimer. Requires Mg(2+) as cofactor.

It catalyses the reaction (7,8-dihydropterin-6-yl)methyl diphosphate + 4-aminobenzoate = 7,8-dihydropteroate + diphosphate. It functions in the pathway cofactor biosynthesis; tetrahydrofolate biosynthesis; 7,8-dihydrofolate from 2-amino-4-hydroxy-6-hydroxymethyl-7,8-dihydropteridine diphosphate and 4-aminobenzoate: step 1/2. Catalyzes the condensation of para-aminobenzoate (pABA) with 6-hydroxymethyl-7,8-dihydropterin diphosphate (DHPt-PP) to form 7,8-dihydropteroate (H2Pte), the immediate precursor of folate derivatives. In Haemophilus influenzae (strain ATCC 51907 / DSM 11121 / KW20 / Rd), this protein is Dihydropteroate synthase (folP-A).